The sequence spans 1365 residues: Killer toxin-resistance protein 5 (1365 aa).

Positions 1 to 17 (MRLLALVLLLLCAPLRA) are cleaved as a signal peptide. Asparagine 115, asparagine 228, asparagine 293, asparagine 457, asparagine 519, asparagine 523, asparagine 644, asparagine 870, asparagine 1091, asparagine 1150, and asparagine 1195 each carry an N-linked (GlcNAc...) asparagine glycan. The disordered stretch occupies residues 1334–1365 (FASSPGDEDVPGESVSSKYQDSDNAAPLHDEL). Residues 1347–1356 (SVSSKYQDSD) are compositionally biased toward polar residues. Residues 1362–1365 (HDEL) carry the Prevents secretion from ER motif.

To D.melanogaster UGGG.

It localises to the endoplasmic reticulum lumen. Functionally, required for (1-&gt;6)-beta-D-glucan synthesis and normal cell growth. This Saccharomyces cerevisiae (strain ATCC 204508 / S288c) (Baker's yeast) protein is Killer toxin-resistance protein 5 (KRE5).